A 192-amino-acid chain; its full sequence is dCTP deaminase, dUMP-forming (192 aa).

DCTP-binding positions include K101 to R106, D119, T127 to E129, Q148, Y162, and Q174. E129 (proton donor/acceptor) is an active-site residue. The interval G165 to L184 is disordered. Residues Y171–H183 show a composition bias toward polar residues.

It belongs to the dCTP deaminase family. As to quaternary structure, homotrimer.

It carries out the reaction dCTP + 2 H2O = dUMP + NH4(+) + diphosphate. Its pathway is pyrimidine metabolism; dUMP biosynthesis; dUMP from dCTP: step 1/1. In terms of biological role, bifunctional enzyme that catalyzes both the deamination of dCTP to dUTP and the hydrolysis of dUTP to dUMP without releasing the toxic dUTP intermediate. In Kocuria rhizophila (strain ATCC 9341 / DSM 348 / NBRC 103217 / DC2201), this protein is dCTP deaminase, dUMP-forming.